Here is a 130-residue protein sequence, read N- to C-terminus: Small ribosomal subunit protein uS8 (130 aa).

This sequence belongs to the universal ribosomal protein uS8 family. Part of the 30S ribosomal subunit. Contacts proteins S5 and S12.

Its function is as follows. One of the primary rRNA binding proteins, it binds directly to 16S rRNA central domain where it helps coordinate assembly of the platform of the 30S subunit. The sequence is that of Small ribosomal subunit protein uS8 from Proteus mirabilis (strain HI4320).